Consider the following 358-residue polypeptide: Probable D-xylulose reductase A (358 aa).

The Zn(2+) site is built by Cys47, His72, and Glu73. 182–187 contacts NAD(+); it reads GAGPVG.

This sequence belongs to the zinc-containing alcohol dehydrogenase family. The cofactor is Zn(2+).

It carries out the reaction xylitol + NAD(+) = D-xylulose + NADH + H(+). It functions in the pathway carbohydrate degradation; L-arabinose degradation via L-arabinitol; D-xylulose 5-phosphate from L-arabinose (fungal route): step 4/5. Xylitol dehydrogenase which catalyzes the conversion of xylitol to D-xylulose. Xylose is a major component of hemicelluloses such as xylan. Most fungi utilize D-xylose via three enzymatic reactions, xylose reductase (XR), xylitol dehydrogenase (XDH), and xylulokinase, to form xylulose 5-phosphate, which enters pentose phosphate pathway. The sequence is that of Probable D-xylulose reductase A (xdhA) from Aspergillus clavatus (strain ATCC 1007 / CBS 513.65 / DSM 816 / NCTC 3887 / NRRL 1 / QM 1276 / 107).